The sequence spans 276 residues: MSPTAGLGLKSQHYAEALASDAEGLWFEVHPENYMAAGGPRLRWLEAIREKRSLSLHGVGLSLAADADPDPDHLAALKTLADRFEPFGVSEHLAWSTHRGAHQPDLLPFPRTRAALDRVARNIERMQDVLGRTILVENPSLYLPLTGHDLDETDFLIELTRRTGCGLLVDVNNVFVSASNLGYAAETYLDALPAEAIGEIHLAGHGPDEGGSALLIDTHGAPIAESVWALYQRLIERVGPRPTLIERDDDIPAFDVLMAERDRAHGMLTPSAASRL.

It belongs to the UPF0276 family.

This chain is UPF0276 protein Caul_0757, found in Caulobacter sp. (strain K31).